The following is a 29-amino-acid chain: Cyclotide mech-3 (29 aa).

The segment at residues 1-29 (GLPTCGETCTLGKCNTPKCTCNWPICYKN) is a cross-link (cyclopeptide (Gly-Asn)). 3 disulfides stabilise this stretch: Cys5/Cys19, Cys9/Cys21, and Cys14/Cys26.

Post-translationally, this is a cyclic peptide. In terms of processing, contains 3 disulfide bonds.

In terms of biological role, probably participates in a plant defense mechanism (Potential). Binds to and induces leakage in phospholipd membranes, particularly ones containing 1-palmitoyl-2-oleophosphatidylethanolamine (POPE). In vitro, displays cytotoxicity against cultured cells but no hemolytic activity towards fresh erythrocytes. This chain is Cyclotide mech-3, found in Melicytus chathamicus (Chatham Island mahoe).